The primary structure comprises 62 residues: DNA-directed RNA polymerase subunit Rpo10 (62 aa).

Zn(2+) contacts are provided by Cys6, Cys9, Cys43, and Cys44.

Belongs to the archaeal Rpo10/eukaryotic RPB10 RNA polymerase subunit family. As to quaternary structure, part of the RNA polymerase complex. It depends on Zn(2+) as a cofactor.

The protein localises to the cytoplasm. It catalyses the reaction RNA(n) + a ribonucleoside 5'-triphosphate = RNA(n+1) + diphosphate. In terms of biological role, DNA-dependent RNA polymerase (RNAP) catalyzes the transcription of DNA into RNA using the four ribonucleoside triphosphates as substrates. The sequence is that of DNA-directed RNA polymerase subunit Rpo10 from Methanospirillum hungatei JF-1 (strain ATCC 27890 / DSM 864 / NBRC 100397 / JF-1).